Consider the following 308-residue polypeptide: HTH-type transcriptional activator AllS (308 aa).

The HTH lysR-type domain maps to 2–59 (FDPETLRTFIAVAETGSFSKAAERLCKTTATISYRIKLLEENTGVALFFRTTRSVTLT). The segment at residues 19–38 (FSKAAERLCKTTATISYRIK) is a DNA-binding region (H-T-H motif).

Belongs to the LysR transcriptional regulatory family.

Positive regulator essential for the expression of allD operon. Binds to the allD promoter. The sequence is that of HTH-type transcriptional activator AllS (allS) from Escherichia coli O1:K1 / APEC.